Here is a 278-residue protein sequence, read N- to C-terminus: Thioredoxin-related transmembrane protein 1 (278 aa).

The first 26 residues, 1-26, serve as a signal peptide directing secretion; the sequence is MAPSGSLRIPVAVLLLLLWGAPWAHG. Positions 27-132 constitute a Thioredoxin domain; sequence KRSDVRIITD…FINFISDKEW (106 aa). Residues 27–180 are Extracellular-facing; it reads KRSDVRIITD…EDLGLPIWGS (154 aa). Catalysis depends on nucleophile residues cysteine 56 and cysteine 59. Cysteines 56 and 59 form a disulfide. The chain crosses the membrane as a helical span at residues 181–203; it reads YTVFALATLLSGLLLGLFMIFVA. Residues 204 to 278 lie on the Cytoplasmic side of the membrane; sequence DCLCPSKRRR…VGPSLATDKS (75 aa). 2 S-palmitoyl cysteine lipidation sites follow: cysteine 205 and cysteine 207. The interval 213 to 278 is disordered; that stretch reads RPQPYPSRKL…VGPSLATDKS (66 aa). Serine 226, serine 245, serine 268, serine 272, and serine 278 each carry phosphoserine. Over residues 235-250 the composition is skewed to acidic residues; the sequence is EEQEADVEDVSEEESE.

Interacts with ATP2A2. Palmitoylated; palmitoylation is required for localization to mitochondria-associated endoplasmic reticulum membrane (MAM).

The protein localises to the endoplasmic reticulum membrane. Its subcellular location is the mitochondrion membrane. It is found in the secreted. The catalysed reaction is Catalyzes the rearrangement of -S-S- bonds in proteins.. Thiredoxin domain-containing protein that participates in various redox reactions through the reversible oxidation of its active center dithiol to a disulfide and catalyze dithiol-disulfide exchange reactions. Acts as a key inhibitor of the alternative triglyceride biosynthesis pathway by inhibiting the activity of TMEM68/DIESL at the endoplasmic reticulum, thereby restricting accumulation of triacylglycerol. The alternative triglyceride biosynthesis pathway mediates formation of triacylglycerol from diacylglycerol and membrane phospholipids. Acts as a protein disulfide isomerase by catalyzing formation or reduction of disulfide bonds. Specifically mediates formation of disulfide bonds of transmembrane proteins at the endoplasmic reticulum membrane. Involved in endoplasmic reticulum-associated degradation (ERAD) via its protein disulfide isomerase activity by acting on folding-defective polypeptides at the endoplasmic reticulum membrane. Acts as a negative regulator of platelet aggregation following secretion in the extracellular space. Acts as a regulator of endoplasmic reticulum-mitochondria contact sites via its ability to regulate redox signals. Regulates endoplasmic reticulum-mitochondria Ca(2+) flux. The polypeptide is Thioredoxin-related transmembrane protein 1 (TMX1) (Bos taurus (Bovine)).